The sequence spans 267 residues: Hydroxyethylthiazole kinase (267 aa).

Residue M46 coordinates substrate. Residues R121 and T167 each coordinate ATP. A194 provides a ligand contact to substrate.

The protein belongs to the Thz kinase family. Mg(2+) is required as a cofactor.

The enzyme catalyses 5-(2-hydroxyethyl)-4-methylthiazole + ATP = 4-methyl-5-(2-phosphooxyethyl)-thiazole + ADP + H(+). The protein operates within cofactor biosynthesis; thiamine diphosphate biosynthesis; 4-methyl-5-(2-phosphoethyl)-thiazole from 5-(2-hydroxyethyl)-4-methylthiazole: step 1/1. In terms of biological role, catalyzes the phosphorylation of the hydroxyl group of 4-methyl-5-beta-hydroxyethylthiazole (THZ). The polypeptide is Hydroxyethylthiazole kinase (Rhizobium leguminosarum bv. trifolii (strain WSM2304)).